The chain runs to 270 residues: 4-hydroxy-tetrahydrodipicolinate reductase (270 aa).

Residues 8–13 (GAAGRM) and Glu34 contribute to the NAD(+) site. Arg35 is a binding site for NADP(+). Residues 98–100 (GST) and 122–125 (SPNM) contribute to the NAD(+) site. The active-site Proton donor/acceptor is His155. Residue His156 participates in (S)-2,3,4,5-tetrahydrodipicolinate binding. The Proton donor role is filled by Lys159. 165 to 166 (GT) is a binding site for (S)-2,3,4,5-tetrahydrodipicolinate.

Belongs to the DapB family.

The protein resides in the cytoplasm. The catalysed reaction is (S)-2,3,4,5-tetrahydrodipicolinate + NAD(+) + H2O = (2S,4S)-4-hydroxy-2,3,4,5-tetrahydrodipicolinate + NADH + H(+). It catalyses the reaction (S)-2,3,4,5-tetrahydrodipicolinate + NADP(+) + H2O = (2S,4S)-4-hydroxy-2,3,4,5-tetrahydrodipicolinate + NADPH + H(+). It participates in amino-acid biosynthesis; L-lysine biosynthesis via DAP pathway; (S)-tetrahydrodipicolinate from L-aspartate: step 4/4. In terms of biological role, catalyzes the conversion of 4-hydroxy-tetrahydrodipicolinate (HTPA) to tetrahydrodipicolinate. The polypeptide is 4-hydroxy-tetrahydrodipicolinate reductase (Anaeromyxobacter dehalogenans (strain 2CP-1 / ATCC BAA-258)).